The chain runs to 504 residues: Cytochrome P450 2K4 (504 aa).

C447 lines the heme pocket.

Belongs to the cytochrome P450 family. The cofactor is heme.

It is found in the endoplasmic reticulum membrane. The protein localises to the microsome membrane. It carries out the reaction an organic molecule + reduced [NADPH--hemoprotein reductase] + O2 = an alcohol + oxidized [NADPH--hemoprotein reductase] + H2O + H(+). The protein is Cytochrome P450 2K4 (cyp2k4) of Oncorhynchus mykiss (Rainbow trout).